We begin with the raw amino-acid sequence, 530 residues long: Seeligeriolysin (530 aa).

An N-terminal signal peptide occupies residues M1 to R25. The tract at residues T36–E55 is disordered. A run of 4 beta stranded transmembrane segments spans residues E215–A228, V235–K244, S313–A322, and K330–S342. Residues E484 to R494 carry the Conserved undecapeptide motif. The Cholesterol binding motif lies at T516–L517.

It belongs to the cholesterol-dependent cytolysin family. As to quaternary structure, homooligomeric pore complex of 35 to 50 subunits; when inserted in the host membrane.

The protein resides in the secreted. It localises to the host cell membrane. In terms of biological role, a cholesterol-dependent toxin that causes cytolysis by forming pores in cholesterol containing host membranes. L.seeligeri is non-pathogenic, perhaps in part because this protein is about 25% as toxic as listeriolysin O. Mutating a single residue in the undecapeptide increases toxicity 2-fold. After binding to target membranes, the protein undergoes a major conformation change, leading to its insertion in the host membrane and formation of an oligomeric pore complex. Cholesterol is required for binding to host membranes, membrane insertion and pore formation; cholesterol binding is mediated by a Thr-Leu pair in the C-terminus. Can be reversibly inactivated by oxidation. The chain is Seeligeriolysin from Listeria seeligeri.